We begin with the raw amino-acid sequence, 576 residues long: 2-isopropylmalate synthase (576 aa).

The Pyruvate carboxyltransferase domain occupies 31 to 305 (PIWMSTDLRD…DPGLDFSHVN (275 aa)). Mg(2+) contacts are provided by Asp-40, His-244, His-246, and Asn-280. A regulatory domain region spans residues 437–576 (ADGPIGYVSH…RGMAPSMELA (140 aa)).

Belongs to the alpha-IPM synthase/homocitrate synthase family. LeuA type 2 subfamily. Homodimer. The cofactor is Mg(2+).

The protein resides in the cytoplasm. It carries out the reaction 3-methyl-2-oxobutanoate + acetyl-CoA + H2O = (2S)-2-isopropylmalate + CoA + H(+). Its pathway is amino-acid biosynthesis; L-leucine biosynthesis; L-leucine from 3-methyl-2-oxobutanoate: step 1/4. Functionally, catalyzes the condensation of the acetyl group of acetyl-CoA with 3-methyl-2-oxobutanoate (2-ketoisovalerate) to form 3-carboxy-3-hydroxy-4-methylpentanoate (2-isopropylmalate). The chain is 2-isopropylmalate synthase from Ralstonia nicotianae (strain ATCC BAA-1114 / GMI1000) (Ralstonia solanacearum).